Here is a 549-residue protein sequence, read N- to C-terminus: Probable amidase (549 aa).

Catalysis depends on charge relay system residues K132 and S209. The active-site Acyl-ester intermediate is S233.

Belongs to the amidase family.

It catalyses the reaction a monocarboxylic acid amide + H2O = a monocarboxylate + NH4(+). In Saccharomyces cerevisiae (strain ATCC 204508 / S288c) (Baker's yeast), this protein is Probable amidase (AMD2).